Here is a 258-residue protein sequence, read N- to C-terminus: Ribosomal RNA small subunit methyltransferase A (258 aa).

S-adenosyl-L-methionine-binding residues include His-13, Leu-15, Gly-40, Glu-61, Asp-86, and Asn-106.

The protein belongs to the class I-like SAM-binding methyltransferase superfamily. rRNA adenine N(6)-methyltransferase family. RsmA subfamily.

It localises to the cytoplasm. The catalysed reaction is adenosine(1518)/adenosine(1519) in 16S rRNA + 4 S-adenosyl-L-methionine = N(6)-dimethyladenosine(1518)/N(6)-dimethyladenosine(1519) in 16S rRNA + 4 S-adenosyl-L-homocysteine + 4 H(+). Specifically dimethylates two adjacent adenosines (A1518 and A1519) in the loop of a conserved hairpin near the 3'-end of 16S rRNA in the 30S particle. May play a critical role in biogenesis of 30S subunits. The protein is Ribosomal RNA small subunit methyltransferase A of Coxiella burnetii (strain Dugway 5J108-111).